The chain runs to 174 residues: Peptide deformylase (174 aa).

2 residues coordinate Fe cation: Cys94 and His136. Residue Glu137 is part of the active site. Residue His140 participates in Fe cation binding.

The protein belongs to the polypeptide deformylase family. Fe(2+) is required as a cofactor.

It catalyses the reaction N-terminal N-formyl-L-methionyl-[peptide] + H2O = N-terminal L-methionyl-[peptide] + formate. Its function is as follows. Removes the formyl group from the N-terminal Met of newly synthesized proteins. Requires at least a dipeptide for an efficient rate of reaction. N-terminal L-methionine is a prerequisite for activity but the enzyme has broad specificity at other positions. This chain is Peptide deformylase, found in Maricaulis maris (strain MCS10) (Caulobacter maris).